The following is a 236-amino-acid chain: Phosphoribosylaminoimidazole-succinocarboxamide synthase (236 aa).

It belongs to the SAICAR synthetase family.

The enzyme catalyses 5-amino-1-(5-phospho-D-ribosyl)imidazole-4-carboxylate + L-aspartate + ATP = (2S)-2-[5-amino-1-(5-phospho-beta-D-ribosyl)imidazole-4-carboxamido]succinate + ADP + phosphate + 2 H(+). Its pathway is purine metabolism; IMP biosynthesis via de novo pathway; 5-amino-1-(5-phospho-D-ribosyl)imidazole-4-carboxamide from 5-amino-1-(5-phospho-D-ribosyl)imidazole-4-carboxylate: step 1/2. This is Phosphoribosylaminoimidazole-succinocarboxamide synthase (purC) from Lactococcus lactis subsp. cremoris (Streptococcus cremoris).